The primary structure comprises 91 residues: Mercuric transport protein periplasmic component (91 aa).

Positions 1–19 (MKKLFASLALAAFVAPVFA) are cleaved as a signal peptide. The region spanning 22–88 (QTVTLSVPGM…ATEDAGYPSS (67 aa)) is the HMA domain. Residues cysteine 33 and cysteine 36 each coordinate Hg(2+).

Belongs to the MerP family. Monomer.

It localises to the periplasm. In terms of biological role, involved in mercury resistance. Acts as a mercury scavenger that specifically binds to a mercuric ion in the periplasm and probably passes it to the cytoplasmic mercuric reductase MerA via the mercuric transport protein MerT. The chain is Mercuric transport protein periplasmic component from Acinetobacter calcoaceticus.